The chain runs to 250 residues: Beta-crystallin B1 (250 aa).

Over residues 1 to 13 the composition is skewed to polar residues; that stretch reads MSQAAKASATTAV. Positions 1-49 are disordered; the sequence is MSQAAKASATTAVNPGPDGKGKGAPSTGPAPAPGPTPVPASVPRPAAKV. S2 carries the post-translational modification N-acetylserine. The tract at residues 2 to 56 is N-terminal arm; that stretch reads SQAAKASATTAVNPGPDGKGKGAPSTGPAPAPGPTPVPASVPRPAAKVGDLPPGS. Residues 28–42 are compositionally biased toward pro residues; the sequence is GPAPAPGPTPVPASV. 2 Beta/gamma crystallin 'Greek key' domains span residues 57 to 96 and 97 to 141; these read YRLIVFEQENFQGRRVEFSGECLNLGDRGFDRVRSLIVVS and GPWV…RPIR. Positions 142–146 are connecting peptide; that stretch reads MDSQE. Beta/gamma crystallin 'Greek key' domains follow at residues 147-188 and 189-231; these read HKIC…TVSG and GTWV…RRLR. The C-terminal arm stretch occupies residues 233–250; that stretch reads RQWHQEGCFPVLTAEPPK.

This sequence belongs to the beta/gamma-crystallin family. Homo/heterodimer, or complexes of higher-order. The structure of beta-crystallin oligomers seems to be stabilized through interactions between the N-terminal arms. In terms of processing, specific cleavages in the N-terminal arm occur during lens maturation and give rise to truncated forms, leading to impaired oligomerization and protein insolubilization. The protease responsible for this partial degradation could be calpain II.

Crystallins are the dominant structural components of the vertebrate eye lens. This chain is Beta-crystallin B1 (Crybb1), found in Mus musculus (Mouse).